Reading from the N-terminus, the 664-residue chain is Glycine--tRNA ligase beta subunit (664 aa).

This sequence belongs to the class-II aminoacyl-tRNA synthetase family. Tetramer of two alpha and two beta subunits.

The protein localises to the cytoplasm. The enzyme catalyses tRNA(Gly) + glycine + ATP = glycyl-tRNA(Gly) + AMP + diphosphate. This chain is Glycine--tRNA ligase beta subunit, found in Rickettsia peacockii (strain Rustic).